A 286-amino-acid chain; its full sequence is Glycine--tRNA ligase alpha subunit (286 aa).

This sequence belongs to the class-II aminoacyl-tRNA synthetase family. As to quaternary structure, tetramer of two alpha and two beta subunits.

Its subcellular location is the cytoplasm. It catalyses the reaction tRNA(Gly) + glycine + ATP = glycyl-tRNA(Gly) + AMP + diphosphate. The sequence is that of Glycine--tRNA ligase alpha subunit from Campylobacter concisus (strain 13826).